We begin with the raw amino-acid sequence, 79 residues long: Cytochrome c oxidase subunit 7A1, mitochondrial (79 aa).

The transit peptide at 1–21 (MQALRVSQALIRSFSSTARNR) directs the protein to the mitochondrion. At 22–46 (FQNRVREKQKLFQEDNDIPLYLKGG) the chain is on the mitochondrial matrix side. Residues 47-75 (IVDNILYRVTMTLCLGGTVYSLYSLGWAS) traverse the membrane as a helical segment. The Mitochondrial intermembrane portion of the chain corresponds to 76 to 79 (FPRN).

The protein belongs to the cytochrome c oxidase VIIa family. As to quaternary structure, component of the complex IV (CIV, cytochrome c oxidase), a multisubunit enzyme composed of 14 subunits. The complex is composed of a catalytic core of 3 subunits MT-CO1, MT-CO2 and MT-CO3, encoded in the mitochondrial DNA, and 11 supernumerary subunits COX4I1 (or COX4I2), COX5A, COX5B, COX6A2 (or COX6A1), COX6B1 (or COX6B2), COX6C, COX7A1 (or COX7A2), COX7B, COX7C, COX8B and NDUFA4, which are encoded in the nuclear genome. The complex exists as a monomer or a dimer and forms supercomplexes (SCs) in the inner mitochondrial membrane with NADH-ubiquinone oxidoreductase (complex I, CI) and ubiquinol-cytochrome c oxidoreductase (cytochrome b-c1 complex, complex III, CIII), resulting in different assemblies (supercomplex SCI(1)III(2)IV(1) and megacomplex MCI(2)III(2)IV(2)).

It is found in the mitochondrion inner membrane. Its pathway is energy metabolism; oxidative phosphorylation. Component of the mitochondrial respiratory complex IV (CIV, also named cytochrome c oxidase complex), the last enzyme in the mitochondrial electron transport chain which drives oxidative phosphorylation. The CIV complex is the component of the respiratory chain that catalyzes the reduction of oxygen to water. Acts as an assembly factor that specifically drives the homodimerization of CIV complexes, mediating the formation of mitochondrial respiratory supercomplexes (respirasomes) containing two CIV: supercomplxes with two molecules of CIV show improved activity. Despite being highly expressed in brown adipose tissue, not required for thermogenesis. The chain is Cytochrome c oxidase subunit 7A1, mitochondrial (COX7A1) from Homo sapiens (Human).